The chain runs to 255 residues: uncharacterized protein (255 aa).

Positions 4–72 constitute a J domain; that stretch reads DPYSVLGVEK…KRRKHYDKTG (69 aa). 2 stretches are compositionally biased toward basic residues: residues 167–178 and 243–255; these read FAPNEKKRKRRA and TKPK…RSKE. Disordered stretches follow at residues 167 to 215 and 230 to 255; these read FAPN…EEAL and LISN…RSKE.

Belongs to the DnaJ family.

Its subcellular location is the nucleus. The protein resides in the nucleolus. This is an uncharacterized protein from Schizosaccharomyces pombe (strain 972 / ATCC 24843) (Fission yeast).